The following is a 759-amino-acid chain: Arylphorin subunit A4 (759 aa).

A signal peptide spans 1–16 (MKIAIVLLAIIALVAA).

The protein belongs to the hemocyanin family. In terms of assembly, heterohexamer. As to expression, fat body.

The protein resides in the secreted. Its subcellular location is the extracellular space. In terms of biological role, arylphorin is a larval storage protein (LSP) which may serve as a storage protein used primarily as a source of aromatic amino acids for protein synthesis during metamorphosis. It is a constituent of the sclerotizing system of the cuticle, and serves as a carrier for ecdysteroid hormone. The sequence is that of Arylphorin subunit A4 from Calliphora vicina (Blue blowfly).